The following is a 388-amino-acid chain: LL-diaminopimelate aminotransferase (388 aa).

Residues Tyr16 and Gly41 each contribute to the substrate site. Pyridoxal 5'-phosphate contacts are provided by residues Tyr70, 104 to 105 (SK), Tyr129, Asn179, Tyr210, and 239 to 241 (SLS). Residues Lys105, Tyr129, and Asn179 each contribute to the substrate site. Position 242 is an N6-(pyridoxal phosphate)lysine (Lys242). Arg250 contributes to the pyridoxal 5'-phosphate binding site. Arg368 contacts substrate.

The protein belongs to the class-I pyridoxal-phosphate-dependent aminotransferase family. LL-diaminopimelate aminotransferase subfamily. As to quaternary structure, homodimer. Pyridoxal 5'-phosphate is required as a cofactor.

It catalyses the reaction (2S,6S)-2,6-diaminopimelate + 2-oxoglutarate = (S)-2,3,4,5-tetrahydrodipicolinate + L-glutamate + H2O + H(+). The protein operates within amino-acid biosynthesis; L-lysine biosynthesis via DAP pathway; LL-2,6-diaminopimelate from (S)-tetrahydrodipicolinate (aminotransferase route): step 1/1. Its function is as follows. Involved in the synthesis of meso-diaminopimelate (m-DAP or DL-DAP), required for both lysine and peptidoglycan biosynthesis. Catalyzes the direct conversion of tetrahydrodipicolinate to LL-diaminopimelate. The polypeptide is LL-diaminopimelate aminotransferase (Nitratidesulfovibrio vulgaris (strain ATCC 29579 / DSM 644 / CCUG 34227 / NCIMB 8303 / VKM B-1760 / Hildenborough) (Desulfovibrio vulgaris)).